Here is a 122-residue protein sequence, read N- to C-terminus: Small ribosomal subunit protein uS13 (122 aa).

The disordered stretch occupies residues glycine 95 to lysine 122.

It belongs to the universal ribosomal protein uS13 family. As to quaternary structure, part of the 30S ribosomal subunit. Forms a loose heterodimer with protein S19. Forms two bridges to the 50S subunit in the 70S ribosome.

Located at the top of the head of the 30S subunit, it contacts several helices of the 16S rRNA. In the 70S ribosome it contacts the 23S rRNA (bridge B1a) and protein L5 of the 50S subunit (bridge B1b), connecting the 2 subunits; these bridges are implicated in subunit movement. Contacts the tRNAs in the A and P-sites. The sequence is that of Small ribosomal subunit protein uS13 from Desulfovibrio desulfuricans (strain ATCC 27774 / DSM 6949 / MB).